The primary structure comprises 282 residues: Formamidopyrimidine-DNA glycosylase (282 aa).

Proline 2 functions as the Schiff-base intermediate with DNA in the catalytic mechanism. Glutamate 3 acts as the Proton donor in catalysis. Lysine 60 serves as the catalytic Proton donor; for beta-elimination activity. Positions 99, 118, and 163 each coordinate DNA. The segment at tryptophan 248–lysine 282 adopts an FPG-type zinc-finger fold. Arginine 272 serves as the catalytic Proton donor; for delta-elimination activity.

The protein belongs to the FPG family. As to quaternary structure, monomer. The cofactor is Zn(2+).

It carries out the reaction Hydrolysis of DNA containing ring-opened 7-methylguanine residues, releasing 2,6-diamino-4-hydroxy-5-(N-methyl)formamidopyrimidine.. It catalyses the reaction 2'-deoxyribonucleotide-(2'-deoxyribose 5'-phosphate)-2'-deoxyribonucleotide-DNA = a 3'-end 2'-deoxyribonucleotide-(2,3-dehydro-2,3-deoxyribose 5'-phosphate)-DNA + a 5'-end 5'-phospho-2'-deoxyribonucleoside-DNA + H(+). Functionally, involved in base excision repair of DNA damaged by oxidation or by mutagenic agents. Acts as a DNA glycosylase that recognizes and removes damaged bases. Has a preference for oxidized purines, such as 7,8-dihydro-8-oxoguanine (8-oxoG). Has AP (apurinic/apyrimidinic) lyase activity and introduces nicks in the DNA strand. Cleaves the DNA backbone by beta-delta elimination to generate a single-strand break at the site of the removed base with both 3'- and 5'-phosphates. The polypeptide is Formamidopyrimidine-DNA glycosylase (Prochlorococcus marinus (strain NATL2A)).